The following is a 233-amino-acid chain: Leucyl/phenylalanyl-tRNA--protein transferase (233 aa).

Belongs to the L/F-transferase family.

Its subcellular location is the cytoplasm. The catalysed reaction is N-terminal L-lysyl-[protein] + L-leucyl-tRNA(Leu) = N-terminal L-leucyl-L-lysyl-[protein] + tRNA(Leu) + H(+). It carries out the reaction N-terminal L-arginyl-[protein] + L-leucyl-tRNA(Leu) = N-terminal L-leucyl-L-arginyl-[protein] + tRNA(Leu) + H(+). It catalyses the reaction L-phenylalanyl-tRNA(Phe) + an N-terminal L-alpha-aminoacyl-[protein] = an N-terminal L-phenylalanyl-L-alpha-aminoacyl-[protein] + tRNA(Phe). Functionally, functions in the N-end rule pathway of protein degradation where it conjugates Leu, Phe and, less efficiently, Met from aminoacyl-tRNAs to the N-termini of proteins containing an N-terminal arginine or lysine. The chain is Leucyl/phenylalanyl-tRNA--protein transferase from Klebsiella pneumoniae subsp. pneumoniae (strain ATCC 700721 / MGH 78578).